A 187-amino-acid polypeptide reads, in one-letter code: Putative manganese efflux pump MntP (187 aa).

The next 6 helical transmembrane spans lie at 3–23 (WLTI…VALA), 39–59 (LGFH…LLGM), 65–85 (ISAY…GRMV), 103–123 (GMTM…VGLS), 124–144 (IAML…VAGV), and 166–186 (ICGG…HTLL).

Belongs to the MntP (TC 9.B.29) family.

The protein resides in the cell inner membrane. Probably functions as a manganese efflux pump. The sequence is that of Putative manganese efflux pump MntP from Geobacter sp. (strain M21).